The chain runs to 501 residues: Solute carrier family 2, facilitated glucose transporter member 5 (501 aa).

Position 1 is an N-acetylmethionine (Met-1). The Cytoplasmic portion of the chain corresponds to 1–18; sequence MEPQDPVKREGRLTPVIV. Residues 19–39 form a helical membrane-spanning segment; sequence LATLIAAFGSSFQYGYNVATI. A D-fructose-binding site is contributed by Tyr-32. Over 40–68 the chain is Extracellular; it reads NSPSEFMKDFYNYTYYDRVGEYMNEFYLT. The N-linked (GlcNAc...) asparagine glycan is linked to Asn-51. A helical transmembrane segment spans residues 69–91; sequence LLWSVTVSMFPFGGFLGSLMVGP. At 92-98 the chain is on the cytoplasmic side; that stretch reads LVNNLGR. Residues 99 to 119 form a helical membrane-spanning segment; it reads KGTLLFNNIFSIVPALLMGFS. At 120 to 126 the chain is on the extracellular side; it reads DLAKSFE. The chain crosses the membrane as a helical span at residues 127–149; the sequence is MIIVARVLVGICAGLSSNVVPMY. The Cytoplasmic segment spans residues 150 to 161; the sequence is LGELAPKNWRGA. A helical membrane pass occupies residues 162–182; it reads LGVVPQLFITIGILVAQIFGL. Gln-167 is a binding site for D-fructose. Topologically, residues 183–192 are extracellular; it reads RSLLANEEGW. A helical transmembrane segment spans residues 193–213; the sequence is PILLGLTGIPAVLQLLFLPFF. Topologically, residues 214–277 are cytoplasmic; the sequence is PESPRYLLIQ…LFKMRSLRWQ (64 aa). Residues 278–298 form a helical membrane-spanning segment; it reads VISIIVLMAGQQLSGVNAIYY. Residues Gln-288 and 296–298 contribute to the D-fructose site; that span reads IYY. The Extracellular segment spans residues 299 to 313; the sequence is YADQIYLSAGVKEDD. A helical transmembrane segment spans residues 314-334; it reads VQYVTAGTGAVNVLITVCAIF. Topologically, residues 335–342 are cytoplasmic; the sequence is VVELMGRR. A helical transmembrane segment spans residues 343 to 363; the sequence is FLLLLGFSVCFTACCVLTGAL. The Extracellular segment spans residues 364–371; it reads AMQDVISW. The chain crosses the membrane as a helical span at residues 372–394; the sequence is MPYVSIACVISYVIGHALGPSPI. His-387 lines the D-fructose pocket. The Cytoplasmic portion of the chain corresponds to 395–412; it reads PALLVTEIFLQSSRPAAY. Residues 413 to 433 traverse the membrane as a helical segment; the sequence is MVAGTVHWLSNFTVGLVFPFI. 419-420 provides a ligand contact to D-fructose; that stretch reads HW. The Extracellular segment spans residues 434-439; that stretch reads QVGLGA. Residues 440 to 460 traverse the membrane as a helical segment; sequence YSFVIFAVICFLTTVYIFLII. The Cytoplasmic portion of the chain corresponds to 461 to 501; sequence PETKSKTFIEINQIFIKMNKVPGVHPEKEELKEFPPSTARQ.

This sequence belongs to the major facilitator superfamily. Sugar transporter (TC 2.A.1.1) family. Glucose transporter subfamily.

The protein resides in the apical cell membrane. It is found in the cell membrane. The protein localises to the sarcolemma. It carries out the reaction D-fructose(out) = D-fructose(in). Its function is as follows. Functions as a fructose transporter that has only low activity with other monosaccharides. Can mediate the uptake of deoxyglucose, but with low efficiency. Essential for fructose uptake in the small intestine. Plays a role in the regulation of salt uptake and blood pressure in response to dietary fructose. Required for the development of high blood pressure in response to high dietary fructose intake. This chain is Solute carrier family 2, facilitated glucose transporter member 5, found in Ovis aries (Sheep).